A 129-amino-acid chain; its full sequence is Histone H2A.J (129 aa).

Residues 1-22 (MSGRGKQGGKVRAKAKSRSSRA) are disordered. An N-acetylserine modification is found at Ser-2. Ser-2 carries the post-translational modification Phosphoserine. Lys-6 is modified (N6-acetyllysine). Residues 7–19 (QGGKVRAKAKSRS) show a composition bias toward basic residues. An N6-lactoyllysine; alternate modification is found at Lys-10. Glycyl lysine isopeptide (Lys-Gly) (interchain with G-Cter in ubiquitin) cross-links involve residues Lys-14 and Lys-16. Gln-105 is subject to N5-methylglutamine. Lys-120 participates in a covalent cross-link: Glycyl lysine isopeptide (Lys-Gly) (interchain with G-Cter in ubiquitin).

It belongs to the histone H2A family. The nucleosome is a histone octamer containing two molecules each of H2A, H2B, H3 and H4 assembled in one H3-H4 heterotetramer and two H2A-H2B heterodimers. The octamer wraps approximately 147 bp of DNA. In terms of processing, monoubiquitination of Lys-120 (H2AXK119ub) gives a specific tag for epigenetic transcriptional repression. Following DNA double-strand breaks (DSBs), it is ubiquitinated through 'Lys-63' linkage of ubiquitin moieties. Post-translationally, phosphorylation on Ser-2 is enhanced during mitosis. Phosphorylation on Ser-2 directly represses transcription.

Its subcellular location is the nucleus. It localises to the chromosome. Core component of nucleosome. Nucleosomes wrap and compact DNA into chromatin, limiting DNA accessibility to the cellular machineries which require DNA as a template. Histones thereby play a central role in transcription regulation, DNA repair, DNA replication and chromosomal stability. DNA accessibility is regulated via a complex set of post-translational modifications of histones, also called histone code, and nucleosome remodeling. The sequence is that of Histone H2A.J (H2A-IX) from Gallus gallus (Chicken).